A 199-amino-acid chain; its full sequence is MRVVVATGNAGKVREIAEALSELGWQLEGLNGLTLPEETGTTYEENAALKACAAALAKGLPALADDSGLEVAALDGQPGVYSARFGNRPNDTERNLYLLEKLRGVQDRRAKFVSVVMLAYPDGHVETYRGELTGTLLEGPRGENGFGYDPLFVPDGETRTLAEMTVAEKRTISHRGRALAALLATHRNGPPPRETVRTE.

Substrate is bound at residue 7–12 (TGNAGK). Glu-37 and Asp-66 together coordinate Mg(2+). Asp-66 acts as the Proton acceptor in catalysis. Substrate-binding positions include Ser-67, 146–149 (FGYD), Lys-169, and 174–175 (HR).

It belongs to the HAM1 NTPase family. In terms of assembly, homodimer. Mg(2+) is required as a cofactor.

It catalyses the reaction XTP + H2O = XMP + diphosphate + H(+). The enzyme catalyses dITP + H2O = dIMP + diphosphate + H(+). It carries out the reaction ITP + H2O = IMP + diphosphate + H(+). In terms of biological role, pyrophosphatase that catalyzes the hydrolysis of nucleoside triphosphates to their monophosphate derivatives, with a high preference for the non-canonical purine nucleotides XTP (xanthosine triphosphate), dITP (deoxyinosine triphosphate) and ITP. Seems to function as a house-cleaning enzyme that removes non-canonical purine nucleotides from the nucleotide pool, thus preventing their incorporation into DNA/RNA and avoiding chromosomal lesions. This chain is dITP/XTP pyrophosphatase, found in Deinococcus geothermalis (strain DSM 11300 / CIP 105573 / AG-3a).